Consider the following 146-residue polypeptide: Small ribosomal subunit protein uS9 (146 aa).

The protein belongs to the universal ribosomal protein uS9 family. Component of the small ribosomal subunit.

The protein resides in the cytoplasm. In terms of biological role, component of the small ribosomal subunit. The ribosome is a large ribonucleoprotein complex responsible for the synthesis of proteins in the cell. The sequence is that of Small ribosomal subunit protein uS9 (rps16) from Ictalurus punctatus (Channel catfish).